Reading from the N-terminus, the 354-residue chain is Trans-L-3-hydroxyproline dehydratase (354 aa).

The Proton acceptor role is filled by Cys-104. Substrate contacts are provided by residues 105 to 106 (GH), Asp-269, and 274 to 275 (GS).

This sequence belongs to the proline racemase family. In terms of assembly, homodimer.

It carries out the reaction trans-3-hydroxy-L-proline = 1-pyrroline-2-carboxylate + H2O. Catalyzes the dehydration of trans-3-hydroxy-L-proline to delta-1-pyrroline-2-carboxylate (Pyr2C). This chain is Trans-L-3-hydroxyproline dehydratase (L3hypdh), found in Mus musculus (Mouse).